Reading from the N-terminus, the 70-residue chain is Large ribosomal subunit protein uL29 (70 aa).

The protein belongs to the universal ribosomal protein uL29 family.

The chain is Large ribosomal subunit protein uL29 from Prochlorococcus marinus (strain NATL1A).